The sequence spans 118 residues: Fluoride-specific ion channel FluC 2 (118 aa).

4 helical membrane-spanning segments follow: residues 1 to 21 (MIEA…RFAI), 33 to 53 (FPIA…YIIG), 55 to 75 (GVTT…FTTF), and 93 to 113 (TFLL…FLGM). Na(+) contacts are provided by Gly-70 and Thr-73.

Belongs to the fluoride channel Fluc/FEX (TC 1.A.43) family.

It localises to the cell membrane. It carries out the reaction fluoride(in) = fluoride(out). With respect to regulation, na(+) is not transported, but it plays an essential structural role and its presence is essential for fluoride channel function. In terms of biological role, fluoride-specific ion channel. Important for reducing fluoride concentration in the cell, thus reducing its toxicity. The polypeptide is Fluoride-specific ion channel FluC 2 (Bacillus thuringiensis subsp. konkukian (strain 97-27)).